The primary structure comprises 199 residues: Charged multivesicular body protein 1B1 (199 aa).

A coiled-coil region spans residues 10 to 48 (NLKFAAKELNRSSKKCDKEEKAEKAKIKKAIQKGNMEVA). The interaction with IST1 stretch occupies residues 132 to 156 (MEDTMSSTTTLTTPQNQVDMLLQEM). A disordered region spans residues 167 to 199 (ELPQGQTGSVGTSVASAEQDELSQRLARLRDQV). Polar residues predominate over residues 170–182 (QGQTGSVGTSVAS). Residues 174 to 199 (GSVGTSVASAEQDELSQRLARLRDQV) form an interaction with SPAST region. Residues 178–199 (TSVASAEQDELSQRLARLRDQV) are a coiled coil. Residues 180-196 (VASAEQDELSQRLARLR) are interaction with VPS4A, MITD1 and STAMBP. The segment at 180-199 (VASAEQDELSQRLARLRDQV) is interaction with VTA1. An interaction with VPS4B region spans residues 183 to 199 (AEQDELSQRLARLRDQV). Positions 186 to 196 (DELSQRLARLR) match the MIT-interacting motif motif.

This sequence belongs to the SNF7 family. Probable peripherally associated component of the endosomal sorting required for transport complex III (ESCRT-III). ESCRT-III components are thought to multimerize to form a flat lattice on the perimeter membrane of the endosome. Several assembly forms of ESCRT-III may exist that interact and act sequentially. Interacts with CHMP1A. Interacts with VTA1; the interaction probably involves the open conformation of CHMP1B. Interacts with CHMP2A. Interacts with VPS4A; the interaction is direct. Interacts with VPS4B; the interaction is direct. Interacts with SPAST (via MIT domain); the interaction is direct. Interacts with IST1. Interacts with MITD1. Interacts with STAMBP.

It is found in the cytoplasm. The protein localises to the cytosol. The protein resides in the endosome. Its subcellular location is the late endosome membrane. Probable peripherally associated component of the endosomal sorting required for transport complex III (ESCRT-III) which is involved in multivesicular bodies (MVBs) formation and sorting of endosomal cargo proteins into MVBs. MVBs contain intraluminal vesicles (ILVs) that are generated by invagination and scission from the limiting membrane of the endosome and mostly are delivered to lysosomes enabling degradation of membrane proteins, such as stimulated growth factor receptors, lysosomal enzymes and lipids. The MVB pathway appears to require the sequential function of ESCRT-O, -I,-II and -III complexes. ESCRT-III proteins mostly dissociate from the invaginating membrane before the ILV is released. The ESCRT machinery also functions in topologically equivalent membrane fission events, such as the terminal stages of cytokinesis. ESCRT-III proteins are believed to mediate the necessary vesicle extrusion and/or membrane fission activities, possibly in conjunction with the AAA ATPase VPS4. Involved in cytokinesis. Involved in recruiting VPS4A and/or VPS4B and SPAST to the midbody of dividing cells. This Mus musculus (Mouse) protein is Charged multivesicular body protein 1B1.